Consider the following 282-residue polypeptide: NFU1 iron-sulfur cluster scaffold homolog, mitochondrial (282 aa).

A mitochondrion-targeting transit peptide spans 1-27 (MSKLLSYTARIILRNSRITVRQLVRGF). The interval 178–246 (IKELLDTRIR…IPEVESVEQV (69 aa)) is nifU. The [4Fe-4S] cluster site is built by Cys215 and Cys218. A disordered region spans residues 263 to 282 (KNLKQKEPAGAPVGIGGGPN).

The protein belongs to the NifU family.

Its subcellular location is the mitochondrion. Its function is as follows. Molecular scaffold for [Fe-S] cluster assembly of mitochondrial iron-sulfur proteins. This chain is NFU1 iron-sulfur cluster scaffold homolog, mitochondrial, found in Drosophila persimilis (Fruit fly).